A 491-amino-acid polypeptide reads, in one-letter code: Ketol-acid reductoisomerase (NADP(+)) (491 aa).

The KARI N-terminal Rossmann domain maps to 15-208 (AQLGKCRFMG…GGHRAGVLES (194 aa)). NADP(+) is bound by residues 45-48 (CGAQ), arginine 68, arginine 76, serine 78, and 108-110 (DKQ). Histidine 132 is an active-site residue. Glycine 158 contributes to the NADP(+) binding site. KARI C-terminal knotted domains follow at residues 209–344 (SFVA…TAPQ) and 345–484 (YEGK…MTDM). Residues aspartate 217, glutamate 221, glutamate 389, and glutamate 393 each coordinate Mg(2+). Serine 414 provides a ligand contact to substrate.

It belongs to the ketol-acid reductoisomerase family. Requires Mg(2+) as cofactor.

It catalyses the reaction (2R)-2,3-dihydroxy-3-methylbutanoate + NADP(+) = (2S)-2-acetolactate + NADPH + H(+). The catalysed reaction is (2R,3R)-2,3-dihydroxy-3-methylpentanoate + NADP(+) = (S)-2-ethyl-2-hydroxy-3-oxobutanoate + NADPH + H(+). The protein operates within amino-acid biosynthesis; L-isoleucine biosynthesis; L-isoleucine from 2-oxobutanoate: step 2/4. Its pathway is amino-acid biosynthesis; L-valine biosynthesis; L-valine from pyruvate: step 2/4. Its function is as follows. Involved in the biosynthesis of branched-chain amino acids (BCAA). Catalyzes an alkyl-migration followed by a ketol-acid reduction of (S)-2-acetolactate (S2AL) to yield (R)-2,3-dihydroxy-isovalerate. In the isomerase reaction, S2AL is rearranged via a Mg-dependent methyl migration to produce 3-hydroxy-3-methyl-2-ketobutyrate (HMKB). In the reductase reaction, this 2-ketoacid undergoes a metal-dependent reduction by NADPH to yield (R)-2,3-dihydroxy-isovalerate. This is Ketol-acid reductoisomerase (NADP(+)) from Escherichia coli (strain 55989 / EAEC).